A 156-amino-acid chain; its full sequence is MKIIEGNLALKGNEKIAIINARFNHIITDRLVEGAKDAFLRHGGDEKNLTLVLVPGAFEIPMALEKVLASGKFDAVCCVGAVIRGATPHFDYVSAETTKGIANVTLKYAKPVTFGVLTVDSIEQAIERAGSKAGNKGFEAMTGVIEMLNLYKKLGE.

5-amino-6-(D-ribitylamino)uracil is bound by residues Phe23, 57–59 (AFE), and 81–83 (AVI). 86–87 (AT) lines the (2S)-2-hydroxy-3-oxobutyl phosphate pocket. His89 (proton donor) is an active-site residue. Position 114 (Phe114) interacts with 5-amino-6-(D-ribitylamino)uracil. (2S)-2-hydroxy-3-oxobutyl phosphate is bound at residue Arg128.

It belongs to the DMRL synthase family.

The enzyme catalyses (2S)-2-hydroxy-3-oxobutyl phosphate + 5-amino-6-(D-ribitylamino)uracil = 6,7-dimethyl-8-(1-D-ribityl)lumazine + phosphate + 2 H2O + H(+). It participates in cofactor biosynthesis; riboflavin biosynthesis; riboflavin from 2-hydroxy-3-oxobutyl phosphate and 5-amino-6-(D-ribitylamino)uracil: step 1/2. Its function is as follows. Catalyzes the formation of 6,7-dimethyl-8-ribityllumazine by condensation of 5-amino-6-(D-ribitylamino)uracil with 3,4-dihydroxy-2-butanone 4-phosphate. This is the penultimate step in the biosynthesis of riboflavin. This is 6,7-dimethyl-8-ribityllumazine synthase from Campylobacter concisus (strain 13826).